A 442-amino-acid polypeptide reads, in one-letter code: Microfibrillar-associated protein 1 (442 aa).

Disordered regions lie at residues 1-34 (MSAPSALVKQPPIQSTAGACPSRNEKGRAVYGEG) and 113-203 (EVVS…PRLK). 2 stretches are compositionally biased toward acidic residues: residues 134–148 (DTSEEEEEEIDDEEI) and 181–198 (ESELESEYEEYTDSEDEM).

Belongs to the MFAP1 family. Component of the spliceosome B complex. Interacts with PRPF38A (via N-terminal interaction domain). Widely expressed.

The protein resides in the nucleus. Its function is as follows. Involved in pre-mRNA splicing as a component of the spliceosome. The polypeptide is Microfibrillar-associated protein 1 (Gallus gallus (Chicken)).